The sequence spans 290 residues: Dual-specificity RNA pseudouridine synthase RluF (290 aa).

In terms of domain architecture, S4 RNA-binding spans 7–74 (VRLNKYISES…EDLVLIALNK (68 aa)). Interaction with RNA stretches follow at residues 105–108 (RLDK) and 187–190 (RQIR). The Nucleophile role is filled by Asp-107. A disordered region spans residues 241 to 290 (SEAKPKAKAKPKTVGIKRPVVKMEKTAEKGGRPASNGKRFTSPGRKKKGR). Over residues 261–271 (VKMEKTAEKGG) the composition is skewed to basic and acidic residues.

Belongs to the pseudouridine synthase RsuA family. As to quaternary structure, monomer.

The enzyme catalyses uridine(2604) in 23S rRNA = pseudouridine(2604) in 23S rRNA. It catalyses the reaction uridine(35) in tRNA(Tyr) = pseudouridine(35) in tRNA(Tyr). Functionally, dual specificity enzyme that catalyzes the synthesis of pseudouridine from uracil-2604 in 23S ribosomal RNA and from uracil-35 in the anticodon of tRNA(Tyr). The sequence is that of Dual-specificity RNA pseudouridine synthase RluF (rluF) from Escherichia coli O6:H1 (strain CFT073 / ATCC 700928 / UPEC).